The primary structure comprises 197 residues: Adenylate kinase (197 aa).

ATP is bound at residue 16–21 (GAGKGT). Residues 36 to 65 (STGDILRDHVARGTELGQQVKPILDAGHLV) are NMP. AMP is bound by residues T37, R42, 63-65 (HLV), 90-93 (GFPR), and Q97. Positions 131 to 147 (ERGNQAQARGEAVRSDD) are LID. R132 lines the ATP pocket. AMP is bound by residues R144 and R155. Position 183 (G183) interacts with ATP.

The protein belongs to the adenylate kinase family. In terms of assembly, monomer.

The protein localises to the cytoplasm. The catalysed reaction is AMP + ATP = 2 ADP. It functions in the pathway purine metabolism; AMP biosynthesis via salvage pathway; AMP from ADP: step 1/1. Functionally, catalyzes the reversible transfer of the terminal phosphate group between ATP and AMP. Plays an important role in cellular energy homeostasis and in adenine nucleotide metabolism. The chain is Adenylate kinase from Deinococcus deserti (strain DSM 17065 / CIP 109153 / LMG 22923 / VCD115).